An 801-amino-acid chain; its full sequence is Phenylalanine--tRNA ligase beta subunit (801 aa).

The region spanning Ala39–Phe153 is the tRNA-binding domain. The 76-residue stretch at Thr406–Thr481 folds into the B5 domain. Mg(2+) contacts are provided by Asp459, Asp465, Glu468, and Glu469. An FDX-ACB domain is found at Thr708–Arg801.

Belongs to the phenylalanyl-tRNA synthetase beta subunit family. Type 1 subfamily. As to quaternary structure, tetramer of two alpha and two beta subunits. It depends on Mg(2+) as a cofactor.

The protein resides in the cytoplasm. It carries out the reaction tRNA(Phe) + L-phenylalanine + ATP = L-phenylalanyl-tRNA(Phe) + AMP + diphosphate + H(+). This chain is Phenylalanine--tRNA ligase beta subunit, found in Streptococcus pyogenes serotype M18 (strain MGAS8232).